A 137-amino-acid chain; its full sequence is Large ribosomal subunit protein uL16 (137 aa).

A disordered region spans residues 1–20 (MLQPSNRKYRKDFKGRNRGV). The span at 7–17 (RKYRKDFKGRN) shows a compositional bias: basic residues.

This sequence belongs to the universal ribosomal protein uL16 family. As to quaternary structure, part of the 50S ribosomal subunit.

Its function is as follows. Binds 23S rRNA and is also seen to make contacts with the A and possibly P site tRNAs. The chain is Large ribosomal subunit protein uL16 from Coxiella burnetii (strain CbuK_Q154) (Coxiella burnetii (strain Q154)).